Consider the following 212-residue polypeptide: Ras-related protein Rab-17 (212 aa).

Serine 29 bears the Phosphoserine mark. 4 residues coordinate GTP: glycine 31, lysine 32, serine 33, and threonine 50. Positions 33, 50, and 73 each coordinate Mg(2+). The Switch 1 signature appears at 43–54 (DFKSILPTVGCA). The Switch 2 signature appears at 75-91 (AGQEKYHSVCHLYFRGA). The GTP site is built by glycine 76, asparagine 132, lysine 133, aspartate 135, and alanine 163. Residues cysteine 209 and cysteine 210 are each lipidated (S-geranylgeranyl cysteine).

Belongs to the small GTPase superfamily. Rab family. Mg(2+) serves as cofactor. As to expression, expressed in melanocytes (at protein level).

It localises to the recycling endosome membrane. Its subcellular location is the melanosome. The protein localises to the cell projection. The protein resides in the dendrite. It catalyses the reaction GTP + H2O = GDP + phosphate + H(+). Regulated by guanine nucleotide exchange factors (GEFs) which promote the exchange of bound GDP for free GTP. Regulated by GTPase activating proteins (GAPs) which increase the GTP hydrolysis activity. Inhibited by GDP dissociation inhibitors (GDIs). In terms of biological role, the small GTPases Rab are key regulators of intracellular membrane trafficking, from the formation of transport vesicles to their fusion with membranes. Rabs cycle between an inactive GDP-bound form and an active GTP-bound form that is able to recruit to membranes different set of downstream effectors directly responsible for vesicle formation, movement, tethering and fusion. RAB17 is involved in transcytosis, the directed movement of endocytosed material through the cell and its exocytosis from the plasma membrane at the opposite side. Mainly observed in epithelial cells, transcytosis mediates for instance, the transcellular transport of immunoglobulins from the basolateral surface to the apical surface. Most probably controls membrane trafficking through apical recycling endosomes in a post-endocytic step of transcytosis. Required for melanosome transport and release from melanocytes, it also regulates dendrite and dendritic spine development. May also play a role in cell migration. This is Ras-related protein Rab-17 from Homo sapiens (Human).